Here is a 375-residue protein sequence, read N- to C-terminus: MSCPVIELTQQLIRRPSLSPDDAGCQALLIERLQAVGFTVEPMNIGDTQNFWAWRGTGETLAFAGHTDVVPAGDVERWINPPFEPTIRDGMLFGRGAADMKGSLAAMVVAAERFVAQHPHHRGRLAFLITSDEEASATNGTVKVVEALMARGERLDYCLVGEPSSSEVVGDVVKNGRRGSLTCNLTIHGVQGHVAYPHLADNPVHRAAPMLNELVGIEWDRGNEFFPPTSMQIANIQAGTGSNNVIPGDLHVQFNFRFSTELTDEMIKQRVVALLEKYQLRYTLDWWLSGQPFLTARGKLVDAVVNAVHHYNEIKPQLLTTGGTSDGRFIARMGAQVVELGPVNATIHKINECVKASDLQLLARMYQRIMEQLVA.

His-66 is a binding site for Zn(2+). The active site involves Asp-68. Asp-99 contributes to the Zn(2+) binding site. The active-site Proton acceptor is Glu-133. Zn(2+)-binding residues include Glu-134, Glu-162, and His-348.

It belongs to the peptidase M20A family. DapE subfamily. As to quaternary structure, homodimer. Zn(2+) serves as cofactor. Co(2+) is required as a cofactor.

It carries out the reaction N-succinyl-(2S,6S)-2,6-diaminopimelate + H2O = (2S,6S)-2,6-diaminopimelate + succinate. It participates in amino-acid biosynthesis; L-lysine biosynthesis via DAP pathway; LL-2,6-diaminopimelate from (S)-tetrahydrodipicolinate (succinylase route): step 3/3. Catalyzes the hydrolysis of N-succinyl-L,L-diaminopimelic acid (SDAP), forming succinate and LL-2,6-diaminopimelate (DAP), an intermediate involved in the bacterial biosynthesis of lysine and meso-diaminopimelic acid, an essential component of bacterial cell walls. The polypeptide is Succinyl-diaminopimelate desuccinylase (Cronobacter sakazakii (strain ATCC BAA-894) (Enterobacter sakazakii)).